We begin with the raw amino-acid sequence, 466 residues long: Glutamate--tRNA ligase 1 (466 aa).

The short motif at P9 to N19 is the 'HIGH' region element. The short motif at K238–R242 is the 'KMSKS' region element. K241 is a binding site for ATP.

It belongs to the class-I aminoacyl-tRNA synthetase family. Glutamate--tRNA ligase type 1 subfamily. Monomer.

The protein resides in the cytoplasm. It carries out the reaction tRNA(Glu) + L-glutamate + ATP = L-glutamyl-tRNA(Glu) + AMP + diphosphate. In terms of biological role, catalyzes the attachment of glutamate to tRNA(Glu) in a two-step reaction: glutamate is first activated by ATP to form Glu-AMP and then transferred to the acceptor end of tRNA(Glu). In Gluconacetobacter diazotrophicus (strain ATCC 49037 / DSM 5601 / CCUG 37298 / CIP 103539 / LMG 7603 / PAl5), this protein is Glutamate--tRNA ligase 1.